Consider the following 311-residue polypeptide: Ribosomal RNA small subunit methyltransferase H (311 aa).

S-adenosyl-L-methionine contacts are provided by residues 34–36, Asp54, Phe78, Asp100, and Gln107; that span reads GGH.

This sequence belongs to the methyltransferase superfamily. RsmH family.

The protein localises to the cytoplasm. It carries out the reaction cytidine(1402) in 16S rRNA + S-adenosyl-L-methionine = N(4)-methylcytidine(1402) in 16S rRNA + S-adenosyl-L-homocysteine + H(+). Specifically methylates the N4 position of cytidine in position 1402 (C1402) of 16S rRNA. This chain is Ribosomal RNA small subunit methyltransferase H, found in Hamiltonella defensa subsp. Acyrthosiphon pisum (strain 5AT).